A 453-amino-acid polypeptide reads, in one-letter code: Bifunctional protein GlmU (453 aa).

The interval 1 to 225 (MNIVILAAGT…DWETLGVNSK (225 aa)) is pyrophosphorylase. UDP-N-acetyl-alpha-D-glucosamine-binding positions include 6-9 (LAAG), lysine 20, glutamine 71, 76-77 (GT), 98-100 (YGD), glycine 135, glutamate 150, asparagine 165, and asparagine 223. Aspartate 100 is a binding site for Mg(2+). Residue asparagine 223 participates in Mg(2+) binding. The linker stretch occupies residues 226–246 (AQLAELERIHQRNVADALLVE). The interval 247 to 453 (GVTLADPARV…GYVRPVKKKS (207 aa)) is N-acetyltransferase. Residues arginine 329 and lysine 347 each contribute to the UDP-N-acetyl-alpha-D-glucosamine site. Catalysis depends on histidine 359, which acts as the Proton acceptor. Positions 362 and 373 each coordinate UDP-N-acetyl-alpha-D-glucosamine. Residues alanine 376, 382 to 383 (NY), serine 401, and alanine 419 contribute to the acetyl-CoA site.

This sequence in the N-terminal section; belongs to the N-acetylglucosamine-1-phosphate uridyltransferase family. The protein in the C-terminal section; belongs to the transferase hexapeptide repeat family. In terms of assembly, homotrimer. Requires Mg(2+) as cofactor.

It is found in the cytoplasm. The enzyme catalyses alpha-D-glucosamine 1-phosphate + acetyl-CoA = N-acetyl-alpha-D-glucosamine 1-phosphate + CoA + H(+). The catalysed reaction is N-acetyl-alpha-D-glucosamine 1-phosphate + UTP + H(+) = UDP-N-acetyl-alpha-D-glucosamine + diphosphate. The protein operates within nucleotide-sugar biosynthesis; UDP-N-acetyl-alpha-D-glucosamine biosynthesis; N-acetyl-alpha-D-glucosamine 1-phosphate from alpha-D-glucosamine 6-phosphate (route II): step 2/2. It participates in nucleotide-sugar biosynthesis; UDP-N-acetyl-alpha-D-glucosamine biosynthesis; UDP-N-acetyl-alpha-D-glucosamine from N-acetyl-alpha-D-glucosamine 1-phosphate: step 1/1. It functions in the pathway bacterial outer membrane biogenesis; LPS lipid A biosynthesis. Functionally, catalyzes the last two sequential reactions in the de novo biosynthetic pathway for UDP-N-acetylglucosamine (UDP-GlcNAc). The C-terminal domain catalyzes the transfer of acetyl group from acetyl coenzyme A to glucosamine-1-phosphate (GlcN-1-P) to produce N-acetylglucosamine-1-phosphate (GlcNAc-1-P), which is converted into UDP-GlcNAc by the transfer of uridine 5-monophosphate (from uridine 5-triphosphate), a reaction catalyzed by the N-terminal domain. This is Bifunctional protein GlmU from Burkholderia vietnamiensis (strain G4 / LMG 22486) (Burkholderia cepacia (strain R1808)).